The chain runs to 1082 residues: Neisserial autotransporter lipoprotein NalP (1082 aa).

An N-terminal signal peptide occupies residues 1 to 27 (MRTTPTFPTKTFKPTAMALAVATTLSA). A lipid anchor (N-palmitoyl cysteine) is attached at Cys28. Cys28 carries S-diacylglycerol cysteine lipidation. One can recognise a Peptidase S8 domain in the interval 110–482 (NDAYKNLINL…WGLLDAGKAM (373 aa)). Active-site charge relay system residues include Asp138, His210, and Ser426. The Autotransporter domain maps to 808–1082 (DGLDHNGTGL…SGRVGVGYRF (275 aa)).

It belongs to the peptidase S8 family. Post-translationally, probably auto-processes to yield a 68-70 kDa form and a C-terminal 30 kDa translocator domain; upon overexpression in situ and in E.coli full-length protein is seen as well as (probably) auto-processed forms of 68-70 kDa and 30 kDa in size, suggesting this may have protease activity.

It localises to the cell outer membrane. It is found in the cell surface. Its subcellular location is the secreted. The protein resides in the host cytoplasm. The protein localises to the host perinuclear region. Its activity is regulated as follows. Cleavage of host complement factor C3 is inhibited by PMSF. Its function is as follows. Major human immunogenic protein, detected in patients recovering from meningitidis. Autotransporter with a secreted protease domain involved in processing other autotransporter proteins including App, IgA, LbpB and NHBA. Probably autoprocesses to release the about 70 kDa passenger domain. Both cell surface protein (Neisserial autotransporter lipoprotein NalP) and the passenger domain cleave human (host) complement factor C3, generating a shorter alpha chain and a longer beta chain than normal. Uptake of a passenger domain fragment (residues 101-784) by human cells increases cell metabolic activity; the serine protease activity is required for this increase. In terms of biological role, cleaves human (host) complement factor C3, generating a shorter alpha chain and a longer beta chain than normal. Does not act on mouse or rabbit C3. Cleavage causes C3b degradation by human CFI and CFH, and thus decreases deposition of C3b on the bacteria surface and probably facilitates complement escape. Functionally, plays a role in extracellular-DNA (eDNA) mediated biofilm formation. In some strains (including cc32 strain MC58) eDNA stimulates biofilm formation. When NalP is not expressed (and no longer processes NHBA or IgA) biofilm formation increases. The chain is Neisserial autotransporter lipoprotein NalP from Neisseria meningitidis serogroup B (strain ATCC BAA-335 / MC58).